We begin with the raw amino-acid sequence, 676 residues long: UvrABC system protein C (676 aa).

One can recognise a GIY-YIG domain in the interval 16–95 (VEPGVYRFRD…IKEFDPRFNI (80 aa)). One can recognise a UVR domain in the interval 208-243 (DRLVRDLERKMTAAAEDLDFERAARLRDDIGALRRA).

Belongs to the UvrC family. As to quaternary structure, interacts with UvrB in an incision complex.

It localises to the cytoplasm. In terms of biological role, the UvrABC repair system catalyzes the recognition and processing of DNA lesions. UvrC both incises the 5' and 3' sides of the lesion. The N-terminal half is responsible for the 3' incision and the C-terminal half is responsible for the 5' incision. The polypeptide is UvrABC system protein C (Mycobacterium sp. (strain KMS)).